The sequence spans 338 residues: MNPLEQLVTQAQTDFAAAIDAAALENAKAKYLGKTGQITEQMKSLGKLAPEERKAQGAVINSAKEKIEAALTARRDALSNAQMEARLNAEAIDITLPGRGRGTGGIHPVMRSWQRVEEIFGSIGFDVADGPEIENDWTNFTALNSPENHPARSMQDTFYIEGKDTQGKPLLLRTHTSPMQVRYARMNKPPIKVIAPGRTYRVDSDATHSPMFHQVEGLWIDENISFADLKGVYLNFVKAFFETDDLQVRFRPSYFPFTEPSAEIDIAFGSGPLKGRWLEVSGAGQVHPTVLRNMGFDPEQFIGFAFGSGLERLTMLRYGINDLRLFYEGDLRFLKQFN.

Residue E259 coordinates Mg(2+).

It belongs to the class-II aminoacyl-tRNA synthetase family. Phe-tRNA synthetase alpha subunit type 1 subfamily. Tetramer of two alpha and two beta subunits. It depends on Mg(2+) as a cofactor.

It localises to the cytoplasm. The catalysed reaction is tRNA(Phe) + L-phenylalanine + ATP = L-phenylalanyl-tRNA(Phe) + AMP + diphosphate + H(+). The polypeptide is Phenylalanine--tRNA ligase alpha subunit (Janthinobacterium sp. (strain Marseille) (Minibacterium massiliensis)).